A 419-amino-acid chain; its full sequence is DNA ligase (419 aa).

Residues 1–120 (MLNQFPGQLS…ARQKRGAHTN (120 aa)) form an NTD region. Residues 121 to 317 (RGMIPPMLVK…NYHSPHLAKL (197 aa)) form an AD domain region. The N6-AMP-lysine intermediate role is filled by Lys151. Positions 318–419 (KPLLDAEFIL…REPINVLEII (102 aa)) are OB domain.

It belongs to the ATP-dependent DNA ligase family.

It is found in the virion. The enzyme catalyses ATP + (deoxyribonucleotide)n-3'-hydroxyl + 5'-phospho-(deoxyribonucleotide)m = (deoxyribonucleotide)n+m + AMP + diphosphate.. In terms of biological role, very low-fidelity DNA ligase that seals nicks in double-stranded DNA during DNA repair. Together with the viral repair DNA polymerase X, fills the single nucleotide gaps generated by the AP endonuclease. It is not essential for viral replication and recombination. Displays a very low adenylation activity towards DNA with 3'-dideoxy- or 3'-amino-terminated nicks compared to regular nick DNA. The protein is DNA ligase of Ornithodoros (relapsing fever ticks).